Consider the following 335-residue polypeptide: Nuclear envelope-associated protein 2 (335 aa).

2 coiled-coil regions span residues 55–85 and 125–260; these read RKEA…ELVA and CSVL…LKKK. Residues 239–260 carry the Bipartite nuclear localization signal motif; sequence KTKELESQLERQRRADQELKKK. Residues 312–329 traverse the membrane as a helical segment; that stretch reads FWDTSGFKIVVSMSMLIL.

Forms homomers and heteromers with NEAP1 and NEAP3. Interacts with SUN1 and SUN2.

Its subcellular location is the nucleus inner membrane. The protein resides in the nucleus. It localises to the nucleoplasm. The protein is Nuclear envelope-associated protein 2 of Arabidopsis thaliana (Mouse-ear cress).